The chain runs to 171 residues: MKKIGIFFGSDTGNTEKIAKLIQKYIGDNVSCLYDISNTSQKDIEDFNFLIFGVPTWYYGEVQCDWDDFLPTLKKINFSNKIVALFGCGDQEDYSEYFCDAIGTIYDILKKNKANIIGKWSTEDYYFEQSKALLNKKYFYGLILDEDRQANKTEYRIKQWVKQIIPYFNTH.

The 162-residue stretch at 4 to 165 (IGIFFGSDTG…RIKQWVKQII (162 aa)) folds into the Flavodoxin-like domain.

Belongs to the flavodoxin family. The cofactor is FMN.

Its function is as follows. Low-potential electron donor to a number of redox enzymes. This Buchnera aphidicola subsp. Acyrthosiphon pisum (strain APS) (Acyrthosiphon pisum symbiotic bacterium) protein is Flavodoxin (fldA).